Here is a 194-residue protein sequence, read N- to C-terminus: Protein GrpE (194 aa).

The interval 1 to 39 is disordered; it reads MTNHEQDQQDNSELLDDDQVTLESQQAADSGAEAPASDD. Over residues 8–20 the composition is skewed to acidic residues; it reads QQDNSELLDDDQV.

This sequence belongs to the GrpE family. As to quaternary structure, homodimer.

It localises to the cytoplasm. Functionally, participates actively in the response to hyperosmotic and heat shock by preventing the aggregation of stress-denatured proteins, in association with DnaK and GrpE. It is the nucleotide exchange factor for DnaK and may function as a thermosensor. Unfolded proteins bind initially to DnaJ; upon interaction with the DnaJ-bound protein, DnaK hydrolyzes its bound ATP, resulting in the formation of a stable complex. GrpE releases ADP from DnaK; ATP binding to DnaK triggers the release of the substrate protein, thus completing the reaction cycle. Several rounds of ATP-dependent interactions between DnaJ, DnaK and GrpE are required for fully efficient folding. The sequence is that of Protein GrpE from Saccharophagus degradans (strain 2-40 / ATCC 43961 / DSM 17024).